The following is a 297-amino-acid chain: ATP synthase subunit gamma, mitochondrial (297 aa).

It belongs to the ATPase gamma chain family. F-type ATPases have 2 components, CF(1) - the catalytic core - and CF(0) - the membrane proton channel. CF(1) has five subunits: alpha(3), beta(3), gamma(1), delta(1), epsilon(1). CF(0) has three main subunits: a, b and c.

The protein localises to the mitochondrion. Its subcellular location is the mitochondrion inner membrane. Mitochondrial membrane ATP synthase (F(1)F(0) ATP synthase or Complex V) produces ATP from ADP in the presence of a proton gradient across the membrane which is generated by electron transport complexes of the respiratory chain. F-type ATPases consist of two structural domains, F(1) - containing the extramembraneous catalytic core, and F(0) - containing the membrane proton channel, linked together by a central stalk and a peripheral stalk. During catalysis, ATP synthesis in the catalytic domain of F(1) is coupled via a rotary mechanism of the central stalk subunits to proton translocation. Part of the complex F(1) domain and the central stalk which is part of the complex rotary element. The gamma subunit protrudes into the catalytic domain formed of alpha(3)beta(3). Rotation of the central stalk against the surrounding alpha(3)beta(3) subunits leads to hydrolysis of ATP in three separate catalytic sites on the beta subunits. In Drosophila melanogaster (Fruit fly), this protein is ATP synthase subunit gamma, mitochondrial.